We begin with the raw amino-acid sequence, 237 residues long: MKKLAEFYRGKAKTVYHTSHPSFLILEFRNDISILDGQCIKQFDRKGMINNKFNFFIMNKLAELGIPTQIEQLLSDNETLVKKLDMIPVECVIRNRAAGSLVRRLGIEEGQILNPPLLELFFKNDSMHDPIINASYCTTFNLVSDTNLVRMQQLTKHANNILTKIFDKKGIILVDFKLEFGLFNNQIILGDEFSPDVSRLWDKKTLKKMDKDRLRQNLGGVIEAYEEVAIRIGVSLT.

This sequence belongs to the SAICAR synthetase family.

The enzyme catalyses 5-amino-1-(5-phospho-D-ribosyl)imidazole-4-carboxylate + L-aspartate + ATP = (2S)-2-[5-amino-1-(5-phospho-beta-D-ribosyl)imidazole-4-carboxamido]succinate + ADP + phosphate + 2 H(+). It functions in the pathway purine metabolism; IMP biosynthesis via de novo pathway; 5-amino-1-(5-phospho-D-ribosyl)imidazole-4-carboxamide from 5-amino-1-(5-phospho-D-ribosyl)imidazole-4-carboxylate: step 1/2. This Baumannia cicadellinicola subsp. Homalodisca coagulata protein is Phosphoribosylaminoimidazole-succinocarboxamide synthase.